A 617-amino-acid chain; its full sequence is V-type proton ATPase catalytic subunit A (617 aa).

250–257 (GAFGCGKT) contacts ATP. Ser-384 carries the post-translational modification Phosphoserine; by AMPK.

Belongs to the ATPase alpha/beta chains family. As to quaternary structure, V-ATPase is a heteromultimeric enzyme made up of two complexes: the ATP-hydrolytic V1 complex and the proton translocation V0 complex. The V1 complex consists of three catalytic AB heterodimers that form a heterohexamer, three peripheral stalks each consisting of EG heterodimers, one central rotor including subunits D and F, and the regulatory subunits C and H. The proton translocation complex V0 consists of the proton transport subunit a, a ring of proteolipid subunits c9c'', rotary subunit d, subunits e and f, and the accessory subunits ATP6AP1/Ac45 and ATP6AP2/PRR. Interacts with the V0 complex V-ATPase subunit a4 ATP6V0A4. Interacts with WFS1. Interacts with alpha-crystallin B chain/CRYAB and with MTOR, forming a ternary complex. Phosphorylation at Ser-384 by AMPK down-regulates its enzyme activity.

The protein localises to the cytoplasm. The protein resides in the cytosol. Its subcellular location is the cytoplasmic vesicle. It is found in the secretory vesicle. It localises to the clathrin-coated vesicle membrane. The protein localises to the lysosome. The catalysed reaction is ATP + H2O + 4 H(+)(in) = ADP + phosphate + 5 H(+)(out). Its activity is regulated as follows. ATP hydrolysis occurs at the interface between the nucleotide-binding domains of subunits A and B. ATP hydrolysis triggers a conformational change in the subunits D and F, which induces a shift of subunit d. The c-ring is subsequently rotated and results in a continuous proton translocation across the membrane. Functionally, catalytic subunit of the V1 complex of vacuolar(H+)-ATPase (V-ATPase), a multisubunit enzyme composed of a peripheral complex (V1) that hydrolyzes ATP and a membrane integral complex (V0) that translocates protons. V-ATPase is responsible for acidifying and maintaining the pH of intracellular compartments and in some cell types, is targeted to the plasma membrane, where it is responsible for acidifying the extracellular environment. In aerobic conditions, involved in intracellular iron homeostasis, thus triggering the activity of Fe(2+) prolyl hydroxylase (PHD) enzymes, and leading to HIF1A hydroxylation and subsequent proteasomal degradation. May play a role in neurite development and synaptic connectivity. The polypeptide is V-type proton ATPase catalytic subunit A (Atp6v1a) (Mus musculus (Mouse)).